The following is a 368-amino-acid chain: (Iso)eugenol O-methyltransferase (368 aa).

Residues 1-2 (MG) constitute a propeptide that is removed on maturation. S-adenosyl-L-methionine-binding positions include serine 187, 211-212 (GG), aspartate 234, 254-255 (DM), and lysine 268. The Proton acceptor role is filled by histidine 272.

The protein belongs to the class I-like SAM-binding methyltransferase superfamily. Cation-independent O-methyltransferase family. COMT subfamily. As to quaternary structure, homodimer. Expressed in petals, style and stamens, but not in stigma, sepals, leaves or stem tissues.

It carries out the reaction (E)-isoeugenol + S-adenosyl-L-methionine = (E)-isomethyleugenol + S-adenosyl-L-homocysteine + H(+). Catalyzes the methylation of the para-4-hydroxyl of both eugenol and (iso)eugenol to methyleugenol and isomethyleugenol, respectively. The resulting products are part of a complex mixture of low-molecular-weight volatile compounds emitted by the flowers to attract pollinators. The protein is (Iso)eugenol O-methyltransferase (IEMT1) of Clarkia breweri (Fairy fans).